Consider the following 349-residue polypeptide: UDP-3-O-acylglucosamine N-acyltransferase (349 aa).

His240 functions as the Proton acceptor in the catalytic mechanism.

The protein belongs to the transferase hexapeptide repeat family. LpxD subfamily. As to quaternary structure, homotrimer.

It carries out the reaction a UDP-3-O-[(3R)-3-hydroxyacyl]-alpha-D-glucosamine + a (3R)-hydroxyacyl-[ACP] = a UDP-2-N,3-O-bis[(3R)-3-hydroxyacyl]-alpha-D-glucosamine + holo-[ACP] + H(+). Its pathway is bacterial outer membrane biogenesis; LPS lipid A biosynthesis. Functionally, catalyzes the N-acylation of UDP-3-O-acylglucosamine using 3-hydroxyacyl-ACP as the acyl donor. Is involved in the biosynthesis of lipid A, a phosphorylated glycolipid that anchors the lipopolysaccharide to the outer membrane of the cell. This chain is UDP-3-O-acylglucosamine N-acyltransferase, found in Porphyromonas gingivalis (strain ATCC BAA-308 / W83).